Reading from the N-terminus, the 132-residue chain is ATP synthase epsilon chain (132 aa).

It belongs to the ATPase epsilon chain family. In terms of assembly, F-type ATPases have 2 components, CF(1) - the catalytic core - and CF(0) - the membrane proton channel. CF(1) has five subunits: alpha(3), beta(3), gamma(1), delta(1), epsilon(1). CF(0) has three main subunits: a, b and c.

The protein localises to the cell inner membrane. In terms of biological role, produces ATP from ADP in the presence of a proton gradient across the membrane. This is ATP synthase epsilon chain from Anaeromyxobacter dehalogenans (strain 2CP-C).